The sequence spans 196 residues: Rho-related protein racA (196 aa).

Residues Ala13, Gly15, Lys16, Thr17, Cys18, Tyr32, Thr35, Gly60, Lys116, Asp118, and Ala159 each contribute to the GTP site. Mg(2+) is bound at residue Thr17. Short sequence motifs (switch) lie at residues 26–37 (NAFPNEYIPTVF) and 57–75 (DTAG…YPQT). Thr35 provides a ligand contact to Mg(2+). The residue at position 193 (Cys193) is a Cysteine methyl ester. Cys193 carries S-geranylgeranyl cysteine lipidation. Positions 194–196 (LLF) are cleaved as a propeptide — removed in mature form.

It belongs to the small GTPase superfamily. Rho family. Interacts (GTP-bound form) with PAK2 (via CRIB domain). The cofactor is Mg(2+).

Its subcellular location is the cell membrane. The protein localises to the cytoplasm. It localises to the cytoskeleton. It catalyses the reaction GTP + H2O = GDP + phosphate + H(+). Regulated by guanine nucleotide exchange factors (GEFs) which promote the exchange of bound GDP for free GTP, GTPase activating proteins (GAPs) which increase the GTP hydrolysis activity, and GDP dissociation inhibitors which inhibit the dissociation of the nucleotide from the GTPase. In terms of biological role, small GTPase which cycles between active GTP-bound and inactive GDP-bound states. Involved in cytoskeleton remodeling. Plays a role in phagocytosis of bacteria and host erythrocytes. Involved in capping of surface receptors. May be involved in cytokinesis. This Entamoeba histolytica (strain ATCC 30459 / HM-1:IMSS / ABRM) protein is Rho-related protein racA.